We begin with the raw amino-acid sequence, 295 residues long: Glycine N-acyltransferase-like protein Keg1 (295 aa).

N6-acetyllysine; alternate is present on lysine 41. Lysine 41 is modified (N6-succinyllysine; alternate). Residue lysine 43 is modified to N6-acetyllysine. At lysine 48 the chain carries N6-acetyllysine; alternate. Lysine 48 is modified (N6-succinyllysine; alternate). N6-acetyllysine occurs at positions 80 and 83. Residues lysine 124, lysine 128, and lysine 140 each carry the N6-acetyllysine; alternate modification. N6-succinyllysine; alternate is present on residues lysine 124, lysine 128, and lysine 140. Lysine 150 is subject to N6-acetyllysine. Lysine 255 is subject to N6-acetyllysine; alternate. N6-succinyllysine; alternate is present on lysine 255.

The protein belongs to the glycine N-acyltransferase family. In terms of assembly, binds to microtubules. In terms of tissue distribution, specifically expressed in kidney and liver. Up-regulated in the regenerating liver as well as in hepatocellular carcinoma.

The protein resides in the cytoplasm. Its subcellular location is the cytoskeleton. The protein localises to the microtubule organizing center. It is found in the centrosome. The catalysed reaction is an acyl-CoA + glycine = an N-acylglycine + CoA + H(+). Its function is as follows. Acyltransferase which transfers the acyl group to the N-terminus of glycine. Can conjugate a multitude of substrates to form a variety of N-acylglycines. The polypeptide is Glycine N-acyltransferase-like protein Keg1 (Keg1) (Rattus norvegicus (Rat)).